The primary structure comprises 372 residues: tRNA-specific 2-thiouridylase MnmA (372 aa).

ATP is bound by residues 11–18 and methionine 37; that span reads GMSGGVDS. The interval 97-99 is interaction with target base in tRNA; the sequence is NPD. The active-site Nucleophile is cysteine 102. A disulfide bridge links cysteine 102 with cysteine 199. Residue glycine 126 coordinates ATP. The segment at 149–151 is interaction with tRNA; sequence KDQ. Residue cysteine 199 is the Cysteine persulfide intermediate of the active site. Residues 309–310 are interaction with tRNA; that stretch reads RY.

Belongs to the MnmA/TRMU family.

The protein localises to the cytoplasm. The enzyme catalyses S-sulfanyl-L-cysteinyl-[protein] + uridine(34) in tRNA + AH2 + ATP = 2-thiouridine(34) in tRNA + L-cysteinyl-[protein] + A + AMP + diphosphate + H(+). In terms of biological role, catalyzes the 2-thiolation of uridine at the wobble position (U34) of tRNA, leading to the formation of s(2)U34. In Staphylococcus aureus (strain USA300), this protein is tRNA-specific 2-thiouridylase MnmA.